The chain runs to 163 residues: Nucleotide-binding protein MAV_4575 (163 aa).

Belongs to the YajQ family.

In terms of biological role, nucleotide-binding protein. This chain is Nucleotide-binding protein MAV_4575, found in Mycobacterium avium (strain 104).